The sequence spans 182 residues: Ribulose bisphosphate carboxylase small subunit, chloroplastic (182 aa).

A chloroplast-targeting transit peptide spans 1–58; the sequence is MACSMISSATVAAVSRASPAQSSMVAPFTCLKSTSAFPVTQKTNNDITSIASNGGRVQ.

It belongs to the RuBisCO small chain family. Heterohexadecamer of 8 large and 8 small subunits.

Its subcellular location is the plastid. The protein resides in the chloroplast. RuBisCO catalyzes two reactions: the carboxylation of D-ribulose 1,5-bisphosphate, the primary event in carbon dioxide fixation, as well as the oxidative fragmentation of the pentose substrate. Both reactions occur simultaneously and in competition at the same active site. Although the small subunit is not catalytic it is essential for maximal activity. The polypeptide is Ribulose bisphosphate carboxylase small subunit, chloroplastic (Betula pendula (European white birch)).